The chain runs to 198 residues: Secreted RxLR effector protein PITG_22926 (198 aa).

The first 20 residues, 1–20 (MLRSFLLIVATVSLFGQCKP), serve as a signal peptide directing secretion. The RxLR-dEER motif lies at 43–52 (RFLRTNDEER).

The protein belongs to the RxLR effector family. As to quaternary structure, interacts with host MAP3Kbeta2 in the nucleoplasm.

It localises to the secreted. The protein localises to the host nucleus. It is found in the host nucleolus. Functionally, secreted effector that promotes P.infestans colonization of plant host. Specifically suppresses Avr4/Cf4- and AvrPto/Pto-triggered cell death. Targets the potato MAP3Kbeta2 kinase, a positive regulator of cell death associated with plant immunity, and perturbs signaling pathways triggered by MAP3Kbeta2. The sequence is that of Secreted RxLR effector protein PITG_22926 from Phytophthora infestans (strain T30-4) (Potato late blight agent).